Reading from the N-terminus, the 373-residue chain is Pectin lyase D (373 aa).

The N-terminal stretch at 1–19 (MKYAAALTAIAALAARAAA) is a signal peptide. 2 cysteine pairs are disulfide-bonded: cysteine 82–cysteine 101 and cysteine 91–cysteine 225. N-linked (GlcNAc...) asparagine glycosylation occurs at asparagine 128. Arginine 255 is a catalytic residue. The N-linked (GlcNAc...) asparagine glycan is linked to asparagine 274. A disulfide bond links cysteine 321 and cysteine 329. N-linked (GlcNAc...) asparagine glycosylation is present at asparagine 348. Residues 354–366 (LPSADAASTSPAS) are compositionally biased toward low complexity. The tract at residues 354–373 (LPSADAASTSPASNAGQGNL) is disordered.

Belongs to the polysaccharide lyase 1 family. Post-translationally, may be O-glycosylated; does not contain N-acetylglucosamine.

The protein localises to the secreted. It catalyses the reaction Eliminative cleavage of (1-&gt;4)-alpha-D-galacturonan methyl ester to give oligosaccharides with 4-deoxy-6-O-methyl-alpha-D-galact-4-enuronosyl groups at their non-reducing ends.. Functionally, pectinolytic enzymes consist of four classes of enzymes: pectin lyase, polygalacturonase, pectin methylesterase and rhamnogalacturonase. Among pectinolytic enzymes, pectin lyase is the most important in depolymerization of pectin, since it cleaves internal glycosidic bonds of highly methylated pectins. This is Pectin lyase D (pelD) from Aspergillus niger.